The following is a 243-amino-acid chain: Small ribosomal subunit protein uS2c (243 aa).

Residues 224 to 243 (GNNGKVSSDQEDTQELQTVQ) are disordered.

This sequence belongs to the universal ribosomal protein uS2 family.

Its subcellular location is the plastid. It localises to the chloroplast. The chain is Small ribosomal subunit protein uS2c (rps2) from Rhodomonas salina (Cryptomonas salina).